Consider the following 1157-residue polypeptide: MSEKKVHLRLRKELSVPIAVVENESLAQLSYEEESQASLMDISMEQQQLRLHSHFDNSKVFTENNRYIVKTLQTDYSSGFSNDDELNGYIDMQIGYGLVNDHKKVYIWNIHSTQKDTPYITVPFRSDDNDEIAVAPRCILTFPATMDESPLALNPNDQDETGGLIIIKGSKAIYYEDINSINNLNFKLSEKFSHELELPINSSGGEKCDLMLNCEPAGIVLSTNMGRIFFITIRNSMGKPQLKLGKLLNKPFKLGIWSKIFNTNSSVVSLRNGPILGKGTRLVYITTNKGIFQTWQLSATNSHPTKLIDVNIYEAILESLQDLYPFAHGTLKIWDSHPLQDESSQLFLSSIYDSSCNETYYILSTIIFDSSSNSFTIFSTYRLNTFMESITDTKFKPKIFIPQMENANDTNEVTSILVMFPNAVVITQVNSKLDSSYSMRRKWEDIVSLRNDIDIIGSGYDSKSLYVLTKQMGVLQFFVKENEETNSKPEVGFVKSHVDQAVYFSKINANPIDFNLPPEISLDQESIEHDLKLTSEEIFHSNGKYIPPMLNTLGQHLSVRKEFFQNFLTFVAKNFNYKISPELKLDLIEKFEILNCCIKFNSIIRQSDVLNDIWEKTLSNYNLTQNEHLTTKTVVINSPDVFPVIFKQFLNHVVFVLFPSQNQNFKLNVTNLINLCFYDGILEEGEKTIRYELLELDPMEVDTSKLPWFINFDYLNCINQCFFDFTFACEEEGSLDSYKEGLLKIVKILYYQFNQFKIWINTQPVKSVNANDNFININNLYDDNHLDWNHVLCKVNLKEQCIQIAEFYKDLSGLVQTLQTLDQNDSTTVSLYETFFNEFPKEFSFTLFEYLIKHKKLNDLIFRFPQQHDVLIQFFQESAPKYGHVAWIQQILDGSYADAMNTLKNITVDDSKKGESLSECELHLNVAKLSSLLVEKDNLDINTLRKIQYNLDTIDAEKNISNKLKKGEVQICKRFKNGSIREVFNILVEELKSTTVVNLSDLVELYSMLDDEESLFIPLRLLSVDGNLLNFEVKKFLNALVWRRIVLLNASNEGDKLLQHIVKRVFDEELPKNNDFPLPSVDLLCDKSLLTPEYISETYGRFPIDQNAIREEIYEEISQVETLNSDNSLEIKLHSTIGSVAKEKNYTINYETNTVEY.

Serine 2 bears the N-acetylserine mark. The required for normal NPC distribution stretch occupies residues methionine 44–serine 236.

The protein belongs to the nucleoporin Nup133 family. As to quaternary structure, component of the nuclear pore complex (NPC). NPC constitutes the exclusive means of nucleocytoplasmic transport. NPCs allow the passive diffusion of ions and small molecules and the active, nuclear transport receptor-mediated bidirectional transport of macromolecules such as proteins, RNAs, ribonucleoparticles (RNPs), and ribosomal subunits across the nuclear envelope. Due to its 8-fold rotational symmetry, all subunits are present with 8 copies or multiples thereof. NUP133 is part of the heptameric 0.5 MDa autoassembling NUP84 NPC subcomplex (NUP84, NUP85, NUP120, NUP133, NUP145C, SEC13 and SEH1).

The protein localises to the nucleus. Its subcellular location is the nuclear pore complex. It is found in the nucleus membrane. Functionally, functions as a component of the nuclear pore complex (NPC). NPC components, collectively referred to as nucleoporins (NUPs), can play the role of both NPC structural components and of docking or interaction partners for transiently associated nuclear transport factors. NUP133 is involved in nuclear poly(A)+ RNA, tRNA and pre-ribosome export, in GSP1 nuclear import, in NPC assembly and distribution, as well as in nuclear envelope organization. This is Nucleoporin NUP133 (NUP133) from Saccharomyces cerevisiae (strain ATCC 204508 / S288c) (Baker's yeast).